A 629-amino-acid polypeptide reads, in one-letter code: Solute carrier family 22 member 14 (629 aa).

The disordered stretch occupies residues 1–21; sequence MKEDQNYKTAFGSQNSRDTHR. The Cytoplasmic segment spans residues 1–67; the sequence is MKEDQNYKTA…IGEFGTFQWR (67 aa). Positions 7-16 are enriched in polar residues; that stretch reads YKTAFGSQNS. The chain crosses the membrane as a helical span at residues 68–88; sequence LVVLTFIPSILSTFFIFSHHF. Residues 89 to 183 are Extracellular-facing; that stretch reads LLTAQRPYCN…LVCGNEPNKE (95 aa). 4 N-linked (GlcNAc...) asparagine glycosylation sites follow: N98, N116, N124, and N149. The helical transmembrane segment at 184–204 threads the bilayer; it reads NGLTVFLSGVLTGSLLFGFLS. Topologically, residues 205–209 are cytoplasmic; sequence DKLGR. The chain crosses the membrane as a helical span at residues 210–230; the sequence is YPIILLSLLGFLIFGFGTAFV. Residues 231–240 lie on the Extracellular side of the membrane; it reads SSFYQYLFFR. A helical membrane pass occupies residues 241 to 261; sequence FFVAQASVGYAICSVSLVMEW. At 262-269 the chain is on the cytoplasmic side; sequence LVGEHRAQ. The helical transmembrane segment at 270–290 threads the bilayer; the sequence is AVILQHSFLTIGVILLTGLAY. Residues 291–295 are Extracellular-facing; the sequence is KVVHW. Residues 296–316 traverse the membrane as a helical segment; sequence RLLCLLGGMPMFPLICNIWVL. Residues 317 to 378 lie on the Cytoplasmic side of the membrane; the sequence is RESPRWLMVR…DFCTNQHLFK (62 aa). A helical membrane pass occupies residues 379–399; it reads VVLAIGCVWFTVSYISFTLNL. Residues 400 to 409 are Extracellular-facing; that stretch reads KMNDFGLDVY. A helical transmembrane segment spans residues 410 to 430; sequence FVQMVRSIVAVPARLCCIILL. Over 431–436 the chain is Cytoplasmic; it reads EYFGRK. The chain crosses the membrane as a helical span at residues 437 to 457; the sequence is WALNLTLFLVTSMCLFLLFLP. Residues 458–463 lie on the Extracellular side of the membrane; the sequence is QEPKST. A helical transmembrane segment spans residues 464–484; it reads IILTLMLAEFSMAGTLSIFFI. Topologically, residues 485–496 are cytoplasmic; it reads YTAELLPTVLRS. A helical membrane pass occupies residues 497 to 517; that stretch reads TGLGMVSLAWVAGAISSVAIF. The Extracellular segment spans residues 518 to 523; sequence KQTKTQ. The helical transmembrane segment at 524–544 threads the bilayer; sequence LPIFFCCLCCVLALCFSSLVP. Residues 545–629 are Cytoplasmic-facing; that stretch reads ETGSQSLRDS…PVQSLKAQPP (85 aa).

It belongs to the major facilitator (TC 2.A.1) superfamily. Organic cation transporter (TC 2.A.1.19) family. Testis-specific (at protein level). Specifically expressed in male germ cells (at protein level).

Its subcellular location is the mitochondrion inner membrane. It is found in the cell projection. The protein localises to the cilium. The protein resides in the flagellum membrane. It carries out the reaction riboflavin(in) = riboflavin(out). In terms of biological role, riboflavin transporter localized at the inner mitochondrial membrane of the spermatozoa midpiece, which is required for male fertility. SLC22A14-mediated riboflavin transport is essential for spermatozoa energy generation and motility: riboflavin is the precursor of FMN and FAD, which are coenzymes of many enzymes in the TCA cycle (the citric acid cycle) in mitochondria. Required for sperm motility and normal sperm flagellar structure. This chain is Solute carrier family 22 member 14, found in Mus musculus (Mouse).